The primary structure comprises 563 residues: Tripeptidyl-peptidase 1 (563 aa).

The signal sequence occupies residues 1–19 (MGLQACLLGLFALILSGKC). The propeptide at 20-195 (SYSPEPDQRR…PEPQVTGTVG (176 aa)) is removed in mature form. Cysteines 111 and 122 form a disulfide. The region spanning 199–563 (GVTPSVIRKR…PALLKTLLNP (365 aa)) is the Peptidase S53 domain. 2 N-linked (GlcNAc...) asparagine glycosylation sites follow: asparagine 210 and asparagine 222. Active-site charge relay system residues include glutamate 272 and aspartate 276. N-linked (GlcNAc...) asparagine glycosylation is found at asparagine 286, asparagine 313, and asparagine 443. 2 disulfides stabilise this stretch: cysteine 365–cysteine 526 and cysteine 522–cysteine 537. Serine 475 serves as the catalytic Charge relay system. Ca(2+) contacts are provided by aspartate 517 and valine 518. Ca(2+)-binding residues include glycine 539, glycine 541, and aspartate 543.

As to quaternary structure, monomer. Interacts with CLN5. Interacts with CLN3. It depends on Ca(2+) as a cofactor. In terms of processing, activated by autocatalytic proteolytical processing upon acidification. N-glycosylation is required for processing and activity. As to expression, detected in all tissues examined with highest levels in heart and placenta and relatively similar levels in other tissues.

The protein resides in the lysosome. It localises to the melanosome. The catalysed reaction is Release of an N-terminal tripeptide from a polypeptide, but also has endopeptidase activity.. Inhibited by diisopropyl fluorophosphate (DFP). Lysosomal serine protease with tripeptidyl-peptidase I activity. May act as a non-specific lysosomal peptidase which generates tripeptides from the breakdown products produced by lysosomal proteinases. Requires substrates with an unsubstituted N-terminus. In Homo sapiens (Human), this protein is Tripeptidyl-peptidase 1 (TPP1).